The chain runs to 246 residues: Putative carbonic anhydrase 3 (246 aa).

The region spanning 3–244 (GHWSYCDDDE…LNDRKIVHIV (242 aa)) is the Alpha-carbonic anhydrase domain. His61 serves as the catalytic Proton acceptor. Zn(2+) contacts are provided by His91, His93, and His116. Substrate is bound at residue 187-188 (TT).

This sequence belongs to the alpha-carbonic anhydrase family. It depends on Zn(2+) as a cofactor.

The enzyme catalyses hydrogencarbonate + H(+) = CO2 + H2O. Reversible hydration of carbon dioxide. The protein is Putative carbonic anhydrase 3 (cah-3) of Caenorhabditis elegans.